A 185-amino-acid polypeptide reads, in one-letter code: Potassium-transporting ATPase KdpC subunit (185 aa).

The chain crosses the membrane as a helical span at residues Leu-8–Ala-28. Residues Gly-113–Ile-132 are disordered. Positions Gln-114 to Ser-126 are enriched in polar residues.

Belongs to the KdpC family. As to quaternary structure, the system is composed of three essential subunits: KdpA, KdpB and KdpC.

Its subcellular location is the cell membrane. Functionally, part of the high-affinity ATP-driven potassium transport (or Kdp) system, which catalyzes the hydrolysis of ATP coupled with the electrogenic transport of potassium into the cytoplasm. This subunit acts as a catalytic chaperone that increases the ATP-binding affinity of the ATP-hydrolyzing subunit KdpB by the formation of a transient KdpB/KdpC/ATP ternary complex. This Staphylococcus haemolyticus (strain JCSC1435) protein is Potassium-transporting ATPase KdpC subunit.